The primary structure comprises 1487 residues: Major viral transcription factor (1487 aa).

3 disordered regions span residues 41-295, 310-370, and 803-1007; these read AAPD…LPPG, LAKT…AEEA, and PPTR…HTPR. Residues 66 to 75 are compositionally biased toward pro residues; that stretch reads VIPPPSPTPE. 2 stretches are compositionally biased toward low complexity: residues 165–193 and 201–213; these read PSSA…SSSS and DGAG…SSSS. Over residues 214–224 the composition is skewed to acidic residues; the sequence is DDSDSDEGGEE. Positions 235-272 are enriched in low complexity; the sequence is AAKTPSAAGSPGPSSGGDRPAAGAATPKSCRSGAASPG. The segment covering 273 to 285 has biased composition (pro residues); it reads APAPAPASAPAPS. 3 stretches are compositionally biased toward low complexity: residues 807–829, 849–860, and 867–877; these read SQQP…AEGS, PSSHSQSPQHSQ, and ATTATCCRATQ. Residues 878–893 show a composition bias toward polar residues; that stretch reads TNARSRGQQHQPQKAR. Residues 920–929 are compositionally biased toward basic residues; the sequence is HGRPRGKSGK. Residues 938–951 are compositionally biased toward low complexity; the sequence is AAQAGASASFSSSA. Residues 988–1007 are compositionally biased toward basic and acidic residues; the sequence is GPDRRGGFRRVPRGDCHTPR.

Belongs to the herpesviridae ICP4 family. A long stretch of serine residues may be a major site of phosphorylation.

Its subcellular location is the host nucleus. Its function is as follows. This IE protein is a multifunctional protein capable of migrating to the nucleus, binding to DNA, trans-activating other viral genes, and autoregulating its own synthesis. This chain is Major viral transcription factor (IE), found in Equine herpesvirus 1 (strain Ab4p) (EHV-1).